An 873-amino-acid polypeptide reads, in one-letter code: Alanine--tRNA ligase (873 aa).

Residues His559, His563, Cys661, and His665 each coordinate Zn(2+).

The protein belongs to the class-II aminoacyl-tRNA synthetase family. In terms of assembly, homotetramer. Zn(2+) is required as a cofactor.

Its subcellular location is the cytoplasm. The enzyme catalyses tRNA(Ala) + L-alanine + ATP = L-alanyl-tRNA(Ala) + AMP + diphosphate. Its function is as follows. Catalyzes the attachment of alanine to tRNA(Ala) in a two-step reaction: alanine is first activated by ATP to form Ala-AMP and then transferred to the acceptor end of tRNA(Ala). Also edits incorrectly charged Ser-tRNA(Ala) and Gly-tRNA(Ala) via its editing domain. The polypeptide is Alanine--tRNA ligase (Wigglesworthia glossinidia brevipalpis).